Reading from the N-terminus, the 214-residue chain is 3,4-dihydroxy-2-butanone 4-phosphate synthase (214 aa).

Residues 37-38 (RE), Asp42, 150-154 (RRGHT), and Glu174 contribute to the D-ribulose 5-phosphate site. Residue Glu38 participates in Mg(2+) binding. His153 contributes to the Mg(2+) binding site.

Belongs to the DHBP synthase family. Homodimer. Requires Mg(2+) as cofactor. Mn(2+) is required as a cofactor.

It catalyses the reaction D-ribulose 5-phosphate = (2S)-2-hydroxy-3-oxobutyl phosphate + formate + H(+). It participates in cofactor biosynthesis; riboflavin biosynthesis; 2-hydroxy-3-oxobutyl phosphate from D-ribulose 5-phosphate: step 1/1. Catalyzes the conversion of D-ribulose 5-phosphate to formate and 3,4-dihydroxy-2-butanone 4-phosphate. The sequence is that of 3,4-dihydroxy-2-butanone 4-phosphate synthase from Histophilus somni (strain 2336) (Haemophilus somnus).